Here is a 435-residue protein sequence, read N- to C-terminus: DMATS-type prenyltransferase fscG (435 aa).

The dimethylallyl diphosphate site is built by Arg111, Lys193, Tyr195, Arg259, Lys261, Tyr263, Tyr352, and Tyr423.

This sequence belongs to the tryptophan dimethylallyltransferase family.

Its pathway is secondary metabolite biosynthesis. In terms of biological role, DMATS-type prenyltransferase; part of the fragmented gene cluster that mediates the biosynthesis of fusarochromene, a tryptophan-derived metabolite closely related to a group of mycotoxins including fusarochromanone. Within the pathway, fscG catalyzes the prenylation of the primary alcohol produced by fscA which is necessary for the formation of the chromene ring by the oxidoreductase fscI. The first step of the pathway is the epimerization of L-tryptophan to D-tryptophan in the presence of the NRPS-like tryptophan epimerase fscC. D-tryptophan is subsequently hydroxylated by the tryptophan 6-hydroxylase fscE to yield 6-hydroxytryptophan. The pyrrole ring undergoes cleavaged by the tryptophan 2,3-dioxygenase fscD and is finally converted to 4-hydroxykyrunenine by the hydrolase fscH. The NRPS-like oxidoreductase fscA reduces the carboxyl group to primary alcohol and the DMATS-type prenyltransferase fscG performs prenylation, followed by the formation of a chromene ring catalyzed by the oxidoreductase fscI, which leads to desacetylfusarochromene. Epoxidation by fscF and rearrangement reactions of chromene double bonds convert compound desacetylfusarochromene to fusarochromanones. Although specific acetyltransferases were not found near the fsc gene cluster, several predicted enzymes containing the N-acetyltransferase superfamily domain are present in the genome of F.equiseti. These predicted enzymes may have the potential to convert desacetylfusarochromene to fusarochromene. In Fusarium equiseti (Fusarium scirpi), this protein is DMATS-type prenyltransferase fscG.